We begin with the raw amino-acid sequence, 214 residues long: Large ribosomal subunit protein uL4 (214 aa).

The tract at residues 43–83 is disordered; it reads RRQAGTHKAKSRSEVNRTTKKSIKQKGSGGARHGSRNAPIF.

The protein belongs to the universal ribosomal protein uL4 family. Part of the 50S ribosomal subunit.

Functionally, one of the primary rRNA binding proteins, this protein initially binds near the 5'-end of the 23S rRNA. It is important during the early stages of 50S assembly. It makes multiple contacts with different domains of the 23S rRNA in the assembled 50S subunit and ribosome. Forms part of the polypeptide exit tunnel. This Hyphomonas neptunium (strain ATCC 15444) protein is Large ribosomal subunit protein uL4.